The sequence spans 813 residues: Calpain-7 (813 aa).

The residue at position 1 (Met1) is an N-acetylmethionine. Thr95 bears the Phosphothreonine mark. The Calpain catalytic domain occupies 232–540; the sequence is RERFAYPMPF…YDVIYLSWNP (309 aa). Active-site residues include Cys290, His458, and Asn478. A domain III region spans residues 541–701; the sequence is GLFKESTCIH…INGKWSGQSA (161 aa). The segment at 702–813 is domain N; sequence GGCGNFQETH…IIPIKITQLQ (112 aa).

Belongs to the peptidase C2 family. As to expression, ubiquitous.

It is found in the nucleus. In terms of biological role, calcium-regulated non-lysosomal thiol-protease. This Homo sapiens (Human) protein is Calpain-7 (CAPN7).